Here is a 427-residue protein sequence, read N- to C-terminus: MALVEDVFSLSPKAVSSALASLWRPIQGGVSAPLGFQAAGITAGLKDSGKPDLALLLAPEGAVCAGMFTTSLVRAACVDLCVDHLQACGGKARAVLINSGQANACTGERGWLDSLRASQALAGRLELPVEQVLICSTGVIGVPIPMDTLLAGLDPLVEALSDEGGAEAAGAILTTDLVEKQFALEAELGGRSVRIGGMAKGSGMIHPDMATMLGYLSCDVGVEVDAWQAMLKRVVDCSFNAMTVDGDTSTNDSCLAFAAGELLEQEHLQALEAGLLVAAQQLAKAIARDGEGATCLLEVQVEGVVGDVEARRIARTVCGSSLVKTAVHGRDPNWGRIVAAAGCAGVPFDPAAVALWLGPHQLMEFGEPLPFDRLAASRYMQERVDGSYLCDDTVQIRLVVGDGSGDGMAWGCDLSDQYVRINADYTT.

Residues threonine 174, lysine 200, threonine 211, glutamate 291, asparagine 422, and threonine 427 each coordinate substrate. The Nucleophile role is filled by threonine 211.

The protein belongs to the ArgJ family. Heterotetramer of two alpha and two beta chains.

It localises to the cytoplasm. The enzyme catalyses N(2)-acetyl-L-ornithine + L-glutamate = N-acetyl-L-glutamate + L-ornithine. It catalyses the reaction L-glutamate + acetyl-CoA = N-acetyl-L-glutamate + CoA + H(+). It functions in the pathway amino-acid biosynthesis; L-arginine biosynthesis; L-ornithine and N-acetyl-L-glutamate from L-glutamate and N(2)-acetyl-L-ornithine (cyclic): step 1/1. Its pathway is amino-acid biosynthesis; L-arginine biosynthesis; N(2)-acetyl-L-ornithine from L-glutamate: step 1/4. Its function is as follows. Catalyzes two activities which are involved in the cyclic version of arginine biosynthesis: the synthesis of N-acetylglutamate from glutamate and acetyl-CoA as the acetyl donor, and of ornithine by transacetylation between N(2)-acetylornithine and glutamate. The polypeptide is Arginine biosynthesis bifunctional protein ArgJ (Prochlorococcus marinus (strain MIT 9313)).